Here is a 385-residue protein sequence, read N- to C-terminus: MTSLGIVTPQSMFFSTPLPLQSGAEITDYTLVYETYGTLNADHSNAVLVCHALNASHHVAGSYSEDASTRGWWDNMVGPGKPLDTDKFFVIGVNNLGSCFGSTGPMHANPATGKPYGPQFPVVTVEDWVQSQARLADALGIRQFAAVMGGSLGGMQALAWSILFPERLRHCVVIASTPKLTAQNIAFDDVARQAILTDPDYHGGDYYAHGVVPKNGLRVARMLGHITYLSDDDMAVKFGRDLRSGSYQFGFGIDFEIESYLRYQGDKFSEYFDANTYLLITKALDYFDPAKDFGGDLTKTLSHTRAQFLLVSFSTDWRFAPERSHEMVQALVNNKRMVTYAEIDASHGHDAFLLDDARYMSVVRAYYERVYKEIDGGSLKAGAQV.

One can recognise an AB hydrolase-1 domain in the interval 45-355 (NAVLVCHALN…SHGHDAFLLD (311 aa)). Ser151 functions as the Nucleophile in the catalytic mechanism. Arg221 provides a ligand contact to substrate. Catalysis depends on residues Asp316 and His349. Asp350 serves as a coordination point for substrate.

It belongs to the AB hydrolase superfamily. MetX family. In terms of assembly, homodimer.

It is found in the cytoplasm. The catalysed reaction is L-homoserine + succinyl-CoA = O-succinyl-L-homoserine + CoA. Its pathway is amino-acid biosynthesis; L-methionine biosynthesis via de novo pathway; O-succinyl-L-homoserine from L-homoserine: step 1/1. Transfers a succinyl group from succinyl-CoA to L-homoserine, forming succinyl-L-homoserine. This Herminiimonas arsenicoxydans protein is Homoserine O-succinyltransferase.